Consider the following 364-residue polypeptide: UDP-N-acetylglucosamine--N-acetylmuramyl-(pentapeptide) pyrophosphoryl-undecaprenol N-acetylglucosamine transferase (364 aa).

Residues Thr-10–Gly-12, Asn-124, Arg-166, Ser-196, and Gln-297 contribute to the UDP-N-acetyl-alpha-D-glucosamine site.

The protein belongs to the glycosyltransferase 28 family. MurG subfamily.

It is found in the cell membrane. The catalysed reaction is di-trans,octa-cis-undecaprenyl diphospho-N-acetyl-alpha-D-muramoyl-L-alanyl-D-glutamyl-meso-2,6-diaminopimeloyl-D-alanyl-D-alanine + UDP-N-acetyl-alpha-D-glucosamine = di-trans,octa-cis-undecaprenyl diphospho-[N-acetyl-alpha-D-glucosaminyl-(1-&gt;4)]-N-acetyl-alpha-D-muramoyl-L-alanyl-D-glutamyl-meso-2,6-diaminopimeloyl-D-alanyl-D-alanine + UDP + H(+). It participates in cell wall biogenesis; peptidoglycan biosynthesis. Its function is as follows. Cell wall formation. Catalyzes the transfer of a GlcNAc subunit on undecaprenyl-pyrophosphoryl-MurNAc-pentapeptide (lipid intermediate I) to form undecaprenyl-pyrophosphoryl-MurNAc-(pentapeptide)GlcNAc (lipid intermediate II). In Thermoanaerobacter pseudethanolicus (strain ATCC 33223 / 39E) (Clostridium thermohydrosulfuricum), this protein is UDP-N-acetylglucosamine--N-acetylmuramyl-(pentapeptide) pyrophosphoryl-undecaprenol N-acetylglucosamine transferase.